Reading from the N-terminus, the 356-residue chain is Tyrosine recombinase XerS (356 aa).

Residues 16–121 enclose the Core-binding (CB) domain; it reads IMPSYVLEYY…ALSSLYKYLT (106 aa). Residues 169-354 form the Tyr recombinase domain; that stretch reads GFLDYIDNEY…INEEQKNALD (186 aa). Residues Arg-210, Lys-234, His-306, Arg-309, and His-332 contribute to the active site. Tyr-341 acts as the O-(3'-phospho-DNA)-tyrosine intermediate in catalysis.

It belongs to the 'phage' integrase family. XerS subfamily.

The protein resides in the cytoplasm. Its activity is regulated as follows. FtsK is required for recombination. Its function is as follows. Site-specific tyrosine recombinase, which acts by catalyzing the cutting and rejoining of the recombining DNA molecules. Essential to convert dimers of the bacterial chromosome into monomers to permit their segregation at cell division. This chain is Tyrosine recombinase XerS, found in Lactococcus lactis subsp. lactis (strain IL1403) (Streptococcus lactis).